The sequence spans 59 residues: uncharacterized protein (59 aa).

Residues 7 to 27 traverse the membrane as a helical segment; it reads LLLLVAIALISAFALTVTGVV.

Its subcellular location is the membrane. This is an uncharacterized protein from Pyrobaculum aerophilum (strain ATCC 51768 / DSM 7523 / JCM 9630 / CIP 104966 / NBRC 100827 / IM2).